We begin with the raw amino-acid sequence, 101 residues long: NAD(P)H-quinone oxidoreductase subunit 4L, chloroplastic (101 aa).

3 consecutive transmembrane segments (helical) span residues 2–22 (MTEH…YGLI), 32–52 (MCLE…SDLF), and 61–81 (IFSI…PAIV).

It belongs to the complex I subunit 4L family. NDH is composed of at least 16 different subunits, 5 of which are encoded in the nucleus.

Its subcellular location is the plastid. It is found in the chloroplast thylakoid membrane. The catalysed reaction is a plastoquinone + NADH + (n+1) H(+)(in) = a plastoquinol + NAD(+) + n H(+)(out). It carries out the reaction a plastoquinone + NADPH + (n+1) H(+)(in) = a plastoquinol + NADP(+) + n H(+)(out). Functionally, NDH shuttles electrons from NAD(P)H:plastoquinone, via FMN and iron-sulfur (Fe-S) centers, to quinones in the photosynthetic chain and possibly in a chloroplast respiratory chain. The immediate electron acceptor for the enzyme in this species is believed to be plastoquinone. Couples the redox reaction to proton translocation, and thus conserves the redox energy in a proton gradient. This Liriodendron tulipifera (Tuliptree) protein is NAD(P)H-quinone oxidoreductase subunit 4L, chloroplastic.